Consider the following 74-residue polypeptide: DUP240 protein DFP2 (74 aa).

It belongs to the DUP/COS family.

It is found in the cytoplasm. The protein resides in the membrane. This Saccharomyces cerevisiae (strain ATCC 204508 / S288c) (Baker's yeast) protein is DUP240 protein DFP2.